The chain runs to 210 residues: MRDPVETYMNLVPMVVEQTNRGERAYDIFSRLLKERIIFVTGPVEDGMSTLTVAQLLFLEAENPKKEISMYINSPGGVVTSGLAIYDTMQFIRPPVSTLCTGQAASMGSLLLAAGHPDMRFSLPNSRIMVHQPSGGFQGQATDIMLHAQEILNLKKRLNEIYVKHTGQTYKAIEDALERDKFLTADMARDFGIVDKVIDKRSEEPTPKAP.

S106 serves as the catalytic Nucleophile. H131 is an active-site residue.

This sequence belongs to the peptidase S14 family. As to quaternary structure, fourteen ClpP subunits assemble into 2 heptameric rings which stack back to back to give a disk-like structure with a central cavity, resembling the structure of eukaryotic proteasomes.

Its subcellular location is the cytoplasm. The catalysed reaction is Hydrolysis of proteins to small peptides in the presence of ATP and magnesium. alpha-casein is the usual test substrate. In the absence of ATP, only oligopeptides shorter than five residues are hydrolyzed (such as succinyl-Leu-Tyr-|-NHMec, and Leu-Tyr-Leu-|-Tyr-Trp, in which cleavage of the -Tyr-|-Leu- and -Tyr-|-Trp bonds also occurs).. In terms of biological role, cleaves peptides in various proteins in a process that requires ATP hydrolysis. Has a chymotrypsin-like activity. Plays a major role in the degradation of misfolded proteins. The protein is ATP-dependent Clp protease proteolytic subunit of Rhodopseudomonas palustris (strain BisB18).